A 173-amino-acid chain; its full sequence is Crossover junction endodeoxyribonuclease RuvC (173 aa).

Active-site residues include Asp8, Glu67, and Asp139. The Mg(2+) site is built by Asp8, Glu67, and Asp139.

Belongs to the RuvC family. In terms of assembly, homodimer which binds Holliday junction (HJ) DNA. The HJ becomes 2-fold symmetrical on binding to RuvC with unstacked arms; it has a different conformation from HJ DNA in complex with RuvA. In the full resolvosome a probable DNA-RuvA(4)-RuvB(12)-RuvC(2) complex forms which resolves the HJ. Requires Mg(2+) as cofactor.

The protein resides in the cytoplasm. The catalysed reaction is Endonucleolytic cleavage at a junction such as a reciprocal single-stranded crossover between two homologous DNA duplexes (Holliday junction).. Functionally, the RuvA-RuvB-RuvC complex processes Holliday junction (HJ) DNA during genetic recombination and DNA repair. Endonuclease that resolves HJ intermediates. Cleaves cruciform DNA by making single-stranded nicks across the HJ at symmetrical positions within the homologous arms, yielding a 5'-phosphate and a 3'-hydroxyl group; requires a central core of homology in the junction. The consensus cleavage sequence is 5'-(A/T)TT(C/G)-3'. Cleavage occurs on the 3'-side of the TT dinucleotide at the point of strand exchange. HJ branch migration catalyzed by RuvA-RuvB allows RuvC to scan DNA until it finds its consensus sequence, where it cleaves and resolves the cruciform DNA. This is Crossover junction endodeoxyribonuclease RuvC from Salmonella dublin (strain CT_02021853).